The chain runs to 261 residues: Cytochrome c oxidase subunit 3 (261 aa).

Topologically, residues 1-15 (MAHQAHAYHMVDPSP) are mitochondrial matrix. The helical transmembrane segment at 16–34 (WPLTGAIGALFLTSGLAIW) threads the bilayer. Over 35–40 (FHFQSV) the chain is Mitochondrial intermembrane. A helical membrane pass occupies residues 41–66 (TLLTLGLILLLLTMYQWWRDIIREGT). At 67-72 (FQGHHT) the chain is on the mitochondrial matrix side. A helical transmembrane segment spans residues 73 to 105 (PPVQKGLRYGMILFITSEVFFFLGFFWAFYHSS). Over 106 to 128 (LAPTPELGGCWPPTGITPLDPFE) the chain is Mitochondrial intermembrane. The chain crosses the membrane as a helical span at residues 129-152 (VPLLNTAVLLASGVTVTWAHHSLM). The Mitochondrial matrix portion of the chain corresponds to 153–155 (EGA). A helical transmembrane segment spans residues 156–183 (RKQAIQALALTIILGVYFTALQAMEYYE). Topologically, residues 184-190 (APFTIAD) are mitochondrial intermembrane. Residues 191–223 (GVYGSTFFVATGFHGLHVIIGSSFLAVCLLRQI) form a helical membrane-spanning segment. Topologically, residues 224-232 (QYHFTSEHH) are mitochondrial matrix. A helical transmembrane segment spans residues 233-256 (FGFEAAAWYWHFVDVVWLFLYVSI). Residues 257–261 (YWWGS) are Mitochondrial intermembrane-facing.

Belongs to the cytochrome c oxidase subunit 3 family. Component of the cytochrome c oxidase (complex IV, CIV), a multisubunit enzyme composed of 14 subunits. The complex is composed of a catalytic core of 3 subunits MT-CO1, MT-CO2 and MT-CO3, encoded in the mitochondrial DNA, and 11 supernumerary subunits COX4I, COX5A, COX5B, COX6A, COX6B, COX6C, COX7A, COX7B, COX7C, COX8 and NDUFA4, which are encoded in the nuclear genome. The complex exists as a monomer or a dimer and forms supercomplexes (SCs) in the inner mitochondrial membrane with NADH-ubiquinone oxidoreductase (complex I, CI) and ubiquinol-cytochrome c oxidoreductase (cytochrome b-c1 complex, complex III, CIII), resulting in different assemblies (supercomplex SCI(1)III(2)IV(1) and megacomplex MCI(2)III(2)IV(2)).

It is found in the mitochondrion inner membrane. The enzyme catalyses 4 Fe(II)-[cytochrome c] + O2 + 8 H(+)(in) = 4 Fe(III)-[cytochrome c] + 2 H2O + 4 H(+)(out). Component of the cytochrome c oxidase, the last enzyme in the mitochondrial electron transport chain which drives oxidative phosphorylation. The respiratory chain contains 3 multisubunit complexes succinate dehydrogenase (complex II, CII), ubiquinol-cytochrome c oxidoreductase (cytochrome b-c1 complex, complex III, CIII) and cytochrome c oxidase (complex IV, CIV), that cooperate to transfer electrons derived from NADH and succinate to molecular oxygen, creating an electrochemical gradient over the inner membrane that drives transmembrane transport and the ATP synthase. Cytochrome c oxidase is the component of the respiratory chain that catalyzes the reduction of oxygen to water. Electrons originating from reduced cytochrome c in the intermembrane space (IMS) are transferred via the dinuclear copper A center (CU(A)) of subunit 2 and heme A of subunit 1 to the active site in subunit 1, a binuclear center (BNC) formed by heme A3 and copper B (CU(B)). The BNC reduces molecular oxygen to 2 water molecules using 4 electrons from cytochrome c in the IMS and 4 protons from the mitochondrial matrix. In Formosania lacustris (Oriental stream loach), this protein is Cytochrome c oxidase subunit 3 (mt-co3).